Here is a 417-residue protein sequence, read N- to C-terminus: Gamma-glutamyl phosphate reductase (417 aa).

This sequence belongs to the gamma-glutamyl phosphate reductase family.

It is found in the cytoplasm. It carries out the reaction L-glutamate 5-semialdehyde + phosphate + NADP(+) = L-glutamyl 5-phosphate + NADPH + H(+). The protein operates within amino-acid biosynthesis; L-proline biosynthesis; L-glutamate 5-semialdehyde from L-glutamate: step 2/2. Functionally, catalyzes the NADPH-dependent reduction of L-glutamate 5-phosphate into L-glutamate 5-semialdehyde and phosphate. The product spontaneously undergoes cyclization to form 1-pyrroline-5-carboxylate. This Erwinia tasmaniensis (strain DSM 17950 / CFBP 7177 / CIP 109463 / NCPPB 4357 / Et1/99) protein is Gamma-glutamyl phosphate reductase.